The following is a 177-amino-acid chain: uncharacterized protein (177 aa).

The tract at residues 1–27 (MSHSRRAAPTQDQCHTPGFPTSRETSG) is disordered.

This is an uncharacterized protein from Homo sapiens (Human).